The primary structure comprises 343 residues: MSAFTPASEVLLRHSDDFEQSRILFAGDLQDDLPARLDTAASRAHTQQFHHWQVLSRQMGDNARFSLVATADDVADCDTLIYYWPKNKPEAQFQLMNLLSLLPVGTDIFVVGENRSGVRSAEQMLADYAPLNKVDSARRCGLYFGRLEKQPMFDADKFWGEYNVDGLTVKTLPGVFSRDGLDVGSQLLLSTLTPHTKGKVLDVGCGAGVLSVAFARHSPKIRLTLCDVSAPAVEASRATLAANGIEGEVFASNVFSEVKGRFDMIISNPPFHDGMQTSLDAAQTLIRGAVRHLNSGGELRIVANAFLPYPDVLDETFGFHEVIAQTGRFKVYRAIMTRQAKKG.

This sequence belongs to the methyltransferase superfamily. RsmC family. As to quaternary structure, monomer.

It is found in the cytoplasm. The enzyme catalyses guanosine(1207) in 16S rRNA + S-adenosyl-L-methionine = N(2)-methylguanosine(1207) in 16S rRNA + S-adenosyl-L-homocysteine + H(+). In terms of biological role, specifically methylates the guanine in position 1207 of 16S rRNA in the 30S particle. The chain is Ribosomal RNA small subunit methyltransferase C from Escherichia fergusonii (strain ATCC 35469 / DSM 13698 / CCUG 18766 / IAM 14443 / JCM 21226 / LMG 7866 / NBRC 102419 / NCTC 12128 / CDC 0568-73).